Reading from the N-terminus, the 599-residue chain is DNA primase (599 aa).

The segment at 38-62 (CPFHDEKTPSFTVSEDKQICHCFGC) adopts a CHC2-type zinc-finger fold. In terms of domain architecture, Toprim spans 260–341 (DEIVLLEGFM…NVFVIQLPSG (82 aa)). Residues glutamate 266, aspartate 310, and aspartate 312 each contribute to the Mg(2+) site.

The protein belongs to the DnaG primase family. As to quaternary structure, monomer. Interacts with DnaB. Requires Zn(2+) as cofactor. The cofactor is Mg(2+).

The catalysed reaction is ssDNA + n NTP = ssDNA/pppN(pN)n-1 hybrid + (n-1) diphosphate.. RNA polymerase that catalyzes the synthesis of short RNA molecules used as primers for DNA polymerase during DNA replication. This Staphylococcus aureus (strain MRSA252) protein is DNA primase.